A 383-amino-acid chain; its full sequence is Agmatine deiminase (383 aa).

Aspartate 220 and aspartate 226 together coordinate agmatine. Cysteine 366 acts as the Amidino-cysteine intermediate in catalysis.

Belongs to the agmatine deiminase family. As to quaternary structure, forms homodimers.

The enzyme catalyses agmatine + H2O = N-carbamoylputrescine + NH4(+). It functions in the pathway amine and polyamine biosynthesis; putrescine biosynthesis via agmatine pathway; N-carbamoylputrescine from agmatine: step 1/1. Inhibited by N-ethylmaleimide and iodoacetamide. In terms of biological role, mediates the hydrolysis of agmatine into N-carbamoylputrescine in the arginine decarboxylase (ADC) pathway of putrescine biosynthesis, a basic polyamine. This Arabidopsis thaliana (Mouse-ear cress) protein is Agmatine deiminase (AIH).